The primary structure comprises 255 residues: Diphthine synthase (255 aa).

Residues Leu-9, Asp-85, Val-88, 113–114 (SI), Leu-164, Ala-207, and His-232 contribute to the S-adenosyl-L-methionine site.

Belongs to the diphthine synthase family. Homodimer.

It catalyses the reaction 2-[(3S)-amino-3-carboxypropyl]-L-histidyl-[translation elongation factor 2] + 3 S-adenosyl-L-methionine = diphthine-[translation elongation factor 2] + 3 S-adenosyl-L-homocysteine + 3 H(+). It functions in the pathway protein modification; peptidyl-diphthamide biosynthesis. S-adenosyl-L-methionine-dependent methyltransferase that catalyzes the trimethylation of the amino group of the modified target histidine residue in translation elongation factor 2 (EF-2), to form an intermediate called diphthine. The three successive methylation reactions represent the second step of diphthamide biosynthesis. This Methanococcus maripaludis (strain DSM 14266 / JCM 13030 / NBRC 101832 / S2 / LL) protein is Diphthine synthase.